The following is a 455-amino-acid chain: tRNA modification GTPase MnmE (455 aa).

(6S)-5-formyl-5,6,7,8-tetrahydrofolate contacts are provided by R26, E86, and R125. Positions 222–376 (GLKTAIIGRP…VEEKINQIFF (155 aa)) constitute a TrmE-type G domain. N232 is a K(+) binding site. GTP contacts are provided by residues 232 to 237 (NVGKSS), 251 to 257 (TDIAGTT), and 276 to 279 (DTAG). A Mg(2+)-binding site is contributed by S236. Residues T251, I253, and T256 each coordinate K(+). T257 is a binding site for Mg(2+). (6S)-5-formyl-5,6,7,8-tetrahydrofolate is bound at residue K455.

Belongs to the TRAFAC class TrmE-Era-EngA-EngB-Septin-like GTPase superfamily. TrmE GTPase family. As to quaternary structure, homodimer. Heterotetramer of two MnmE and two MnmG subunits. The cofactor is K(+).

The protein resides in the cytoplasm. Functionally, exhibits a very high intrinsic GTPase hydrolysis rate. Involved in the addition of a carboxymethylaminomethyl (cmnm) group at the wobble position (U34) of certain tRNAs, forming tRNA-cmnm(5)s(2)U34. The protein is tRNA modification GTPase MnmE of Lactococcus lactis subsp. lactis (strain IL1403) (Streptococcus lactis).